A 185-amino-acid polypeptide reads, in one-letter code: Anaphase-promoting complex subunit 10 (185 aa).

An N-acetylthreonine modification is found at Thr2. Positions 2 to 185 (TTPNKTPPGA…IDFMMYRSIR (184 aa)) constitute a DOC domain. An N6-acetyllysine modification is found at Lys169.

Belongs to the APC10 family. In terms of assembly, the mammalian APC/C is composed at least of 14 distinct subunits ANAPC1, ANAPC2, CDC27/APC3, ANAPC4, ANAPC5, CDC16/APC6, ANAPC7, CDC23/APC8, ANAPC10, ANAPC11, CDC26/APC12, ANAPC13, ANAPC15 and ANAPC16 that assemble into a complex of at least 19 chains with a combined molecular mass of around 1.2 MDa; APC/C interacts with FZR1 and FBXO5. The C-terminus of APC10 binds to CDC27/APC3. Interacts with PIWIL1; interaction only takes place when PIWIL1 binds piRNA. Interacts with FBXO43; the interaction is direct.

It functions in the pathway protein modification; protein ubiquitination. In terms of biological role, component of the anaphase promoting complex/cyclosome (APC/C), a cell cycle-regulated E3 ubiquitin ligase that controls progression through mitosis and the G1 phase of the cell cycle. The APC/C complex acts by mediating ubiquitination and subsequent degradation of target proteins: it mainly mediates the formation of 'Lys-11'-linked polyubiquitin chains and, to a lower extent, the formation of 'Lys-48'- and 'Lys-63'-linked polyubiquitin chains. The APC/C complex catalyzes assembly of branched 'Lys-11'-/'Lys-48'-linked branched ubiquitin chains on target proteins. The sequence is that of Anaphase-promoting complex subunit 10 (ANAPC10) from Bos taurus (Bovine).